Reading from the N-terminus, the 1642-residue chain is Cortactin-binding protein 2 (1642 aa).

Disordered regions lie at residues 1–27, 203–222, 366–433, 446–471, and 491–611; these read MATDGASCEPDFSRAPEDAAGAPAEAA, KKKTSALEEELATEKRRSTE, IGAS…HPGL, GSNANDPDQNGNTTQSPPSRDVSPTS, and RFTS…PSID. A coiled-coil region spans residues 119–276; sequence RKMQERMSTQ…EQLKRGTDSK (158 aa). Polar residues predominate over residues 385–394; it reads GPSTGSTADL. Over residues 395–407 the composition is skewed to low complexity; it reads TSSPTPVPSTVSP. Asymmetric dimethylarginine is present on arginine 491. Residues 497–506 show a composition bias toward pro residues; it reads AGAPPRPGAP. Residues 576–586 are compositionally biased toward polar residues; it reads TVASPPSTLPQ. ANK repeat units follow at residues 702–732, 736–765, 769–798, 802–831, 835–864, and 904–934; these read GRPTLLQQAAAQGNVTLLSMLLNEEGLDINY, DGHSALYSAAKNGHTDCVRLLLNAEAQVNV, NGFTPLCAAAAQGHFKCVELLIAYDANINH, GGQTPLYLACKNGNKECIKLLLEAGTDRSV, DGWTPIHAAVDTGNVDSLKLLMYHRAPAHG, and EGWTAAHIAASKGFKNCLEVLCRHGGLEPER. The segment at 1440 to 1469 is disordered; that stretch reads ESGAWRKVSTSPRKKSGRFSSPTWNKPDLS. Position 1513 is a phosphoserine (serine 1513). Residues 1546 to 1642 form a disordered region; sequence RRFDSSGNNP…NSRDLEPTQK (97 aa). 2 stretches are compositionally biased toward polar residues: residues 1552–1563 and 1571–1588; these read GNNPVFSATVNN and KEVSPLSSHQTTECSNSK. The span at 1613 to 1627 shows a compositional bias: low complexity; sequence SQNTKRSSSSSNTRQ.

As to quaternary structure, interacts with CTTN/cortactin SH3 domain. Interacts with STRN, STRN4/zinedin and MOB4/phocein; this interactions mediate the association with the STRIPAK core complex and may regulate dendritic spine distribution of the STRIPAK complex in hippocampal neurons. Activation of glutamate receptors weakens the interaction with STRN and STRN4.

The protein resides in the cytoplasm. It is found in the cell cortex. It localises to the cell projection. The protein localises to the dendritic spine. In terms of biological role, regulates the dendritic spine distribution of CTTN/cortactin in hippocampal neurons, and thus controls dendritic spinogenesis and dendritic spine maintenance. Associates with the striatin-interacting phosphatase and kinase (STRIPAK) core complex to regulate dendritic spine distribution of the STRIPAK complex in hippocampal neurons. This is Cortactin-binding protein 2 (CTTNBP2) from Muntiacus reevesi (Reeves' muntjac).